Consider the following 360-residue polypeptide: Chorismate synthase (360 aa).

2 residues coordinate NADP(+): Arg-48 and Arg-54. Residues 125-127 (RSS), 246-247 (NA), Gly-286, 301-305 (KPTSS), and Arg-327 contribute to the FMN site.

It belongs to the chorismate synthase family. As to quaternary structure, homotetramer. It depends on FMNH2 as a cofactor.

The enzyme catalyses 5-O-(1-carboxyvinyl)-3-phosphoshikimate = chorismate + phosphate. It functions in the pathway metabolic intermediate biosynthesis; chorismate biosynthesis; chorismate from D-erythrose 4-phosphate and phosphoenolpyruvate: step 7/7. In terms of biological role, catalyzes the anti-1,4-elimination of the C-3 phosphate and the C-6 proR hydrogen from 5-enolpyruvylshikimate-3-phosphate (EPSP) to yield chorismate, which is the branch point compound that serves as the starting substrate for the three terminal pathways of aromatic amino acid biosynthesis. This reaction introduces a second double bond into the aromatic ring system. This Haemophilus ducreyi (strain 35000HP / ATCC 700724) protein is Chorismate synthase.